Reading from the N-terminus, the 623-residue chain is Translation initiation factor IF-2 (623 aa).

The span at 1–18 shows a compositional bias: low complexity; sequence MTLNKKTNNENSSKTTPK. 2 disordered regions span residues 1-21 and 92-115; these read MTLNKKTNNENSSKTTPKLSK and PQKEQTPPQLQPQKPPLTKSKLQA. In terms of domain architecture, tr-type G spans 125 to 293; sequence KTPPIVTIMG…ILLFSEIQNL (169 aa). Residues 134-141 form a G1 region; that stretch reads GHVDHGKT. 134–141 is a GTP binding site; the sequence is GHVDHGKT. Residues 159–163 form a G2 region; sequence GITQH. The G3 stretch occupies residues 180 to 183; sequence DTPG. GTP-binding positions include 180–184 and 234–237; these read DTPGH and NKVD. The segment at 234–237 is G4; sequence NKVD. The tract at residues 270-272 is G5; it reads SAL.

This sequence belongs to the TRAFAC class translation factor GTPase superfamily. Classic translation factor GTPase family. IF-2 subfamily.

It localises to the cytoplasm. In terms of biological role, one of the essential components for the initiation of protein synthesis. Protects formylmethionyl-tRNA from spontaneous hydrolysis and promotes its binding to the 30S ribosomal subunits. Also involved in the hydrolysis of GTP during the formation of the 70S ribosomal complex. The polypeptide is Translation initiation factor IF-2 (Aster yellows witches'-broom phytoplasma (strain AYWB)).